The chain runs to 125 residues: Large ribosomal subunit protein bL12 (125 aa).

The protein belongs to the bacterial ribosomal protein bL12 family. Homodimer. Part of the ribosomal stalk of the 50S ribosomal subunit. Forms a multimeric L10(L12)X complex, where L10 forms an elongated spine to which 2 to 4 L12 dimers bind in a sequential fashion. Binds GTP-bound translation factors.

In terms of biological role, forms part of the ribosomal stalk which helps the ribosome interact with GTP-bound translation factors. Is thus essential for accurate translation. This chain is Large ribosomal subunit protein bL12, found in Rickettsia typhi (strain ATCC VR-144 / Wilmington).